The sequence spans 305 residues: 4-diphosphocytidyl-2-C-methyl-D-erythritol kinase (305 aa).

K15 is a catalytic residue. Position 99–109 (99–109) interacts with ATP; that stretch reads PMGGGIGGGSS. D141 is a catalytic residue.

This sequence belongs to the GHMP kinase family. IspE subfamily.

It catalyses the reaction 4-CDP-2-C-methyl-D-erythritol + ATP = 4-CDP-2-C-methyl-D-erythritol 2-phosphate + ADP + H(+). Its pathway is isoprenoid biosynthesis; isopentenyl diphosphate biosynthesis via DXP pathway; isopentenyl diphosphate from 1-deoxy-D-xylulose 5-phosphate: step 3/6. In terms of biological role, catalyzes the phosphorylation of the position 2 hydroxy group of 4-diphosphocytidyl-2C-methyl-D-erythritol. The protein is 4-diphosphocytidyl-2-C-methyl-D-erythritol kinase of Marinomonas sp. (strain MWYL1).